A 281-amino-acid chain; its full sequence is 2-dehydro-3-deoxyphosphooctonate aldolase (281 aa).

Belongs to the KdsA family.

It localises to the cytoplasm. The enzyme catalyses D-arabinose 5-phosphate + phosphoenolpyruvate + H2O = 3-deoxy-alpha-D-manno-2-octulosonate-8-phosphate + phosphate. Its pathway is carbohydrate biosynthesis; 3-deoxy-D-manno-octulosonate biosynthesis; 3-deoxy-D-manno-octulosonate from D-ribulose 5-phosphate: step 2/3. It functions in the pathway bacterial outer membrane biogenesis; lipopolysaccharide biosynthesis. The polypeptide is 2-dehydro-3-deoxyphosphooctonate aldolase (Pseudomonas entomophila (strain L48)).